A 206-amino-acid polypeptide reads, in one-letter code: Thymidylate kinase (206 aa).

11–18 contributes to the ATP binding site; the sequence is GIDGAGKT.

It belongs to the thymidylate kinase family.

It carries out the reaction dTMP + ATP = dTDP + ADP. Phosphorylation of dTMP to form dTDP in both de novo and salvage pathways of dTTP synthesis. The protein is Thymidylate kinase of Burkholderia ambifaria (strain MC40-6).